We begin with the raw amino-acid sequence, 862 residues long: Phosphofurin acidic cluster sorting protein 2 (862 aa).

Disordered regions lie at residues 151-215 (HEDS…TTSM), 263-436 (LDVE…TRSQ), and 658-713 (SSAT…SQGV). Over residues 263–272 (LDVENPSDSG) the composition is skewed to low complexity. Positions 313 to 328 (SHREPPSPADVPEKTR) are enriched in basic and acidic residues. Residues 332–344 (GKQQLSDSVSDTV) are compositionally biased toward polar residues. 5 positions are modified to phosphoserine: S361, S387, S424, S662, and S665. 2 stretches are compositionally biased toward low complexity: residues 658 to 693 (SSAT…KEAS) and 700 to 710 (PSVSGGLSSPS).

It belongs to the PACS family. In terms of assembly, interacts with BID and PKD2. Interacts with SIRT1. Interacts with HDAC1. Interacts with TRPV1. Interacts with WDR37.

The protein localises to the endoplasmic reticulum. Its subcellular location is the mitochondrion. Its function is as follows. Multifunctional sorting protein that controls the endoplasmic reticulum (ER)-mitochondria communication, including the apposition of mitochondria with the ER and ER homeostasis. In addition, in response to apoptotic inducer, translocates BIB to mitochondria, which initiates a sequence of events including the formation of mitochondrial truncated BID, the release of cytochrome c, the activation of caspase-3 thereby causing cell death. May also involved in ion channel trafficking, directing acidic cluster-containing ion channels to distinct subcellular compartments. The sequence is that of Phosphofurin acidic cluster sorting protein 2 (Pacs2) from Mus musculus (Mouse).